A 585-amino-acid polypeptide reads, in one-letter code: Parathyroid hormone/parathyroid hormone-related peptide receptor (585 aa).

Residues 1-26 form the signal peptide; sequence MGAPRISHSLALLLCCSVLSSVYALV. Over 27–185 the chain is Extracellular; it reads DADDVITKEE…REREVFDRLG (159 aa). Disulfide bonds link C48/C114, C105/C145, and C128/C167. The tract at residues 69-90 is disordered; it reads MSRSAKTKKEKPAEKLYSQAEE. N-linked (GlcNAc...) asparagine glycans are attached at residues N148, N158, N163, and N173. The helical transmembrane segment at 186 to 209 threads the bilayer; sequence MIYTVGYSISLGSLTVAVLILGYF. The Cytoplasmic segment spans residues 210 to 216; that stretch reads RRLHCTR. A helical membrane pass occupies residues 217-236; it reads NYIHMHLFVSFMLRAVSIFI. The Extracellular portion of the chain corresponds to 237–276; sequence KDAVLYSGVSTDEIERITEEELRAFTEPPPADKAGFVGCR. The helical transmembrane segment at 277 to 300 threads the bilayer; that stretch reads VAVTVFLYFLTTNYYWILVEGLYL. The Cytoplasmic portion of the chain corresponds to 301–314; the sequence is HSLIFMAFFSEKKY. The helical transmembrane segment at 315–336 threads the bilayer; the sequence is LWGFTLFGWGLPAVFVAVWVTV. The Extracellular segment spans residues 337 to 355; the sequence is RATLANTECWDLSSGNKKW. A helical transmembrane segment spans residues 356–376; the sequence is IIQVPILAAIVVNFILFINII. Residues 377–403 lie on the Cytoplasmic side of the membrane; sequence RVLATKLRETNAGRCDTRQQYRKLLKS. Residues 404 to 422 form a helical membrane-spanning segment; the sequence is TLVLMPLFGVHYIVFMATP. At 423–434 the chain is on the extracellular side; sequence YTEVSGILWQVQ. A helical membrane pass occupies residues 435-457; sequence MHYEMLFNSFQGFFVAIIYCFCN. The Cytoplasmic portion of the chain corresponds to 458-585; sequence GEVQAEIKKS…LLEEERETVM (128 aa). The Important for interaction with G proteins motif lies at 468 to 471; that stretch reads WSRW. The interval 531–585 is disordered; sequence PGYVKHGSISENSLPSSGPEPGTKDDGYLNGSGLYEPMVGEQPPPLLEEERETVM.

This sequence belongs to the G-protein coupled receptor 2 family. As to quaternary structure, homodimer in the absence of bound ligand. Peptide hormone binding leads to dissociation of the homodimer. In terms of processing, N-glycosylated.

Its subcellular location is the cell membrane. G-protein-coupled receptor for parathyroid hormone (PTH) and for parathyroid hormone-related peptide (PTHLH). Ligand binding causes a conformation change that triggers signaling via guanine nucleotide-binding proteins (G proteins) and modulates the activity of downstream effectors, such as adenylate cyclase (cAMP). PTH1R is coupled to G(s) G alpha proteins and mediates activation of adenylate cyclase activity. PTHLH dissociates from PTH1R more rapidly than PTH; as consequence, the cAMP response induced by PTHLH decays faster than the response induced by PTH. The protein is Parathyroid hormone/parathyroid hormone-related peptide receptor (PTH1R) of Didelphis virginiana (North American opossum).